We begin with the raw amino-acid sequence, 263 residues long: Purine nucleoside phosphorylase SACOL1200 (263 aa).

Zn(2+) is bound by residues His-79, Cys-124, and His-141.

This sequence belongs to the purine nucleoside phosphorylase YfiH/LACC1 family. In terms of assembly, homodimer. Cu(2+) is required as a cofactor. Requires Zn(2+) as cofactor.

It carries out the reaction adenosine + phosphate = alpha-D-ribose 1-phosphate + adenine. It catalyses the reaction S-methyl-5'-thioadenosine + phosphate = 5-(methylsulfanyl)-alpha-D-ribose 1-phosphate + adenine. The enzyme catalyses inosine + phosphate = alpha-D-ribose 1-phosphate + hypoxanthine. The catalysed reaction is adenosine + H2O + H(+) = inosine + NH4(+). Functionally, purine nucleoside enzyme that catalyzes the phosphorolysis of adenosine and inosine nucleosides, yielding D-ribose 1-phosphate and the respective free bases, adenine and hypoxanthine. Also catalyzes the phosphorolysis of S-methyl-5'-thioadenosine into adenine and S-methyl-5-thio-alpha-D-ribose 1-phosphate. Also has adenosine deaminase activity. In Staphylococcus aureus (strain COL), this protein is Purine nucleoside phosphorylase SACOL1200.